The primary structure comprises 1793 residues: Non-reducing polyketide synthase adaA (1793 aa).

An N-terminal acylcarrier protein transacylase domain (SAT) region spans residues 16–250; that stretch reads NDDLKALFRG…YSKSLALPVY (235 aa). Residues 388–821 form the Ketosynthase family 3 (KS3) domain; sequence DSKLAIVGMA…GGNTTLVLED (434 aa). Active-site for beta-ketoacyl synthase activity residues include Cys-561, His-696, and His-739. Positions 923–1245 are malonyl-CoA:ACP transacylase (MAT) domain; the sequence is VFTFTGQGAY…KSLCTLHLAG (323 aa). The product template (PT) domain stretch occupies residues 1312-1634; that stretch reads TSLIHQVTEE…RLLMDRFFSP (323 aa). The tract at residues 1316-1452 is N-terminal hotdog fold; sequence HQVTEETVDK…GSIKYPADPT (137 aa). A PKS/mFAS DH domain is found at 1316–1629; sequence HQVTEETVDK…FRRVPRLLMD (314 aa). His-1348 serves as the catalytic Proton acceptor; for dehydratase activity. The segment at 1482 to 1629 is C-terminal hotdog fold; it reads KASTLSKPLA…FRRVPRLLMD (148 aa). The Proton donor; for dehydratase activity role is filled by Asp-1540. Residues 1642–1659 show a composition bias toward low complexity; that stretch reads AAPAPAPAAVPAVKKQPP. The disordered stretch occupies residues 1642-1714; that stretch reads AAPAPAPAAV…TTEQEAPVAD (73 aa). A compositionally biased stretch (polar residues) spans 1660–1681; the sequence is TETIQPQAPKTEQKQDQLQLPN. Residues 1683-1706 are compositionally biased toward low complexity; that stretch reads ASAAPSTANSSSSPSSSGVATPTT. Positions 1716–1793 constitute a Carrier domain; that stretch reads SAVTGVAGKC…DLTGWLEQYC (78 aa). Ser-1753 is modified (O-(pantetheine 4'-phosphoryl)serine).

Requires pantetheine 4'-phosphate as cofactor.

The enzyme catalyses holo-[ACP] + 9 malonyl-CoA + acetyl-CoA + 9 H(+) = 3-(2,4-dioxopentyl)-3,6,8,9-tetrahydroxy-1-oxo-1,2,3,4-tetrahydroanthracene-2-carboxyl-[ACP] + 9 CO2 + 10 CoA + 2 H2O. Its pathway is secondary metabolite biosynthesis. Functionally, non-reducing polyketide synthase; part of the gene cluster that mediates the biosynthesis of the linear tetracyclic TAN-1612 neuropeptide Y receptor antagonist. The decaketide backbone of TAN-1612 is synthesized by the non-reducing polyketide synthase adaA via condensation of one acetyl-CoA starter unit with 9 malonyl-CoA units. The FAD-dependent monooxygenase adaC then performs hydroxylation at C2 while the polaketide chain is still attached to the NRPKS adaA. The alpha-hydroxylation step at C2 appears to be crucial for the following C18-C1 Claisen cyclization and release of the C9-hydroxyl version of TAN-1612 from the NRPKS adaA, two steps performed by the lactamase-like protein adaB. Finally, the O-methyltransferase adaD performs the C9 O-methylation to complete the biosynthesis of TAN-1612. The chain is Non-reducing polyketide synthase adaA from Aspergillus niger (strain ATCC MYA-4892 / CBS 513.88 / FGSC A1513).